Consider the following 168-residue polypeptide: Peptide deformylase (168 aa).

2 residues coordinate Fe cation: Cys-92 and His-134. Glu-135 is a catalytic residue. His-138 is a Fe cation binding site.

The protein belongs to the polypeptide deformylase family. The cofactor is Fe(2+).

It carries out the reaction N-terminal N-formyl-L-methionyl-[peptide] + H2O = N-terminal L-methionyl-[peptide] + formate. Removes the formyl group from the N-terminal Met of newly synthesized proteins. Requires at least a dipeptide for an efficient rate of reaction. N-terminal L-methionine is a prerequisite for activity but the enzyme has broad specificity at other positions. In Stutzerimonas stutzeri (strain A1501) (Pseudomonas stutzeri), this protein is Peptide deformylase.